The sequence spans 431 residues: MRRLRRLAHLVLFCPFSKRLQGRLPGLRVRCIFLAWLGVFAGSWLVYVHYSSYSERCRGHVCQVVICDQYRKGIISGSVCQDLCELHMVEWRTCLSVAPGQQVYSGLWRDKDVTIKCGIEETLDSKARSDAAPRRELVLFDKPTRGTSIKEFREMTLSFLKANLGDLPSLPALVGQVLLMADFNKDNRVSLAEAKSVWALLQRNEFLLLLSLQEKEHASRLLGYCGDLYLTEGVPHGAWHAAALPPLLRPLLPPALQGALQQWLGPAWPWRAKIAIGLLEFVEELFHGSYGTFYMCETTLANVGYTATYDFKMADLQQVAPEATVRRFLQGRRCEHSTDCTYGRDCRAPCDRLMRQCKGDLIQPNLAKVCALLRGYLLPGAPADLREELGTQLRTCTTLSGLASQVEAHHSLVLSHLKTLLWKKISNTKYS.

Topologically, residues 1-30 are cytoplasmic; sequence MRRLRRLAHLVLFCPFSKRLQGRLPGLRVR. The May mediate ER retention signature appears at 5–6; the sequence is RR. The helical transmembrane segment at 31 to 51 threads the bilayer; sequence CIFLAWLGVFAGSWLVYVHYS. The Lumenal portion of the chain corresponds to 52–431; sequence SYSERCRGHV…WKKISNTKYS (380 aa). Intrachain disulfides connect Cys-57-Cys-94 and Cys-62-Cys-117.

This sequence belongs to the DIPK family. Post-translationally, among the many cysteines in the lumenal domain, most are probably involved in disulfide bonds.

It is found in the endoplasmic reticulum membrane. This is Divergent protein kinase domain 1B from Homo sapiens (Human).